A 309-amino-acid polypeptide reads, in one-letter code: D-allose kinase (309 aa).

ATP-binding positions include 10–17 and 142–149; these read GVDMGATH and GMGFAVWM.

It belongs to the ROK (NagC/XylR) family.

The enzyme catalyses D-allose + ATP = D-allose 6-phosphate + ADP + H(+). It functions in the pathway carbohydrate degradation; D-allose degradation. Catalyzes the phosphorylation of D-allose to D-allose 6-phosphate. Also has low level glucokinase activity in vitro. The chain is D-allose kinase from Escherichia coli (strain K12).